The primary structure comprises 390 residues: Pyruvate dehydrogenase E1 component subunit alpha, somatic form, mitochondrial (390 aa).

A mitochondrion-targeting transit peptide spans 1–29; it reads MRKMLAAVSRVLSGVAQKPASRVLVASRH. The residue at position 63 (Lys-63) is an N6-acetyllysine; alternate. N6-succinyllysine; alternate is present on Lys-63. The pyruvate site is built by His-92, Tyr-118, Arg-119, Ala-157, Gly-165, Val-167, Asp-196, Gly-197, Ala-198, Asn-225, and Tyr-227. The thiamine diphosphate site is built by Tyr-118 and Arg-119. 6 residues coordinate thiamine diphosphate: Gly-165, Val-167, Asp-196, Gly-197, Ala-198, and Asn-225. Asp-196 provides a ligand contact to Mg(2+). Mg(2+)-binding residues include Asn-225 and Tyr-227. A Phosphoserine; by PDK1 modification is found at Ser-232. At Lys-244 the chain carries N6-acetyllysine; alternate. The residue at position 244 (Lys-244) is an N6-succinyllysine; alternate. Lys-267 is subject to N6-acetyllysine. The residue at position 277 (Lys-277) is an N6-succinyllysine. His-292 is a binding site for thiamine diphosphate. Ser-293 is modified (phosphoserine; by PDK1, PDK2, PDK3 and PDK4). Ser-295 bears the Phosphoserine mark. Position 300 is a phosphoserine; by PDK1, PDK2, PDK3 and PDK4 (Ser-300). Tyr-301 bears the Phosphotyrosine mark. Lys-313 is subject to N6-acetyllysine; alternate. An N6-succinyllysine; alternate modification is found at Lys-313. An N6-acetyllysine mark is found at Lys-321 and Lys-336. An N6-succinyllysine modification is found at Lys-385.

As to quaternary structure, heterotetramer of two PDHA1 and two PDHB subunits. The heterotetramer interacts with DLAT, and is part of the multimeric pyruvate dehydrogenase complex that contains multiple copies of pyruvate dehydrogenase (E1), dihydrolipoamide acetyltransferase (DLAT, E2) and lipoamide dehydrogenase (DLD, E3). These subunits are bound to an inner core composed of about 48 DLAT and 12 PDHX molecules. Requires thiamine diphosphate as cofactor. Mg(2+) serves as cofactor. Post-translationally, phosphorylation at Ser-232, Ser-293 and Ser-300 by PDK family kinases inactivates the enzyme; for this phosphorylation at a single site is sufficient. Phosphorylation at Ser-293 interferes with access to active site, and thereby inactivates the enzyme. Dephosphorylation at all three sites, i.e. at Ser-232, Ser-293 and Ser-300, is required for reactivation. In terms of processing, acetylation alters the phosphorylation pattern. Deacetylated by SIRT3.

It is found in the mitochondrion matrix. The catalysed reaction is N(6)-[(R)-lipoyl]-L-lysyl-[protein] + pyruvate + H(+) = N(6)-[(R)-S(8)-acetyldihydrolipoyl]-L-lysyl-[protein] + CO2. With respect to regulation, pyruvate dehydrogenase activity is inhibited by phosphorylation of PDHA1; it is reactivated by dephosphorylation. In terms of biological role, the pyruvate dehydrogenase complex catalyzes the overall conversion of pyruvate to acetyl-CoA and CO(2), and thereby links the glycolytic pathway to the tricarboxylic cycle. This chain is Pyruvate dehydrogenase E1 component subunit alpha, somatic form, mitochondrial (PDHA1), found in Bos taurus (Bovine).